The chain runs to 443 residues: METLASLYNEHLSTLQQRTRDVLERHQLDALLIHSGELQRLFLDDRDYPFKVNPQFKAWVPVTEVPNCWLWVDGVNTPKLWFYSPVDYWHSVEPLPDSFWTKNIDVQPLLNADDIAQQLPVQRERVAYIGYAQQRAQALGFSAENINPQPVLDYLHYYRSYKTDYELACMREAQKTAVVGHRAAYEAFQSGMSEFDINLAYLMATGHRDTDVPYDNIVALNEHSAVLHYTILQHQPPAEIRSFLIDAGAEYNGYAADLTRTYAADRDSDFAALISDLNTEQLALIDTIKSGERYTDYHVQMHQRIAKLLRTHNLVTGISEEAMVEQGITCPFLPHGLGHPLGLQVHDTAGFMQDDKGTNLNAPSKYPYLRCTRVLQPRMVLTIEPGLYFIDSLLAPWRIGEFSKHFNWDRIDALKPYGGIRIEDNIVIHDKRVENMTRDLKLA.

Mn(2+) is bound by residues Asp-246, Asp-257, His-339, Glu-384, and Glu-423.

It belongs to the peptidase M24B family. Bacterial-type prolidase subfamily. Mn(2+) serves as cofactor.

The enzyme catalyses Xaa-L-Pro dipeptide + H2O = an L-alpha-amino acid + L-proline. In terms of biological role, splits dipeptides with a prolyl residue in the C-terminal position. This Yersinia pseudotuberculosis serotype I (strain IP32953) protein is Xaa-Pro dipeptidase.